Consider the following 216-residue polypeptide: MVNRTAIIKQPDNISFFNDVYKLQKEYQESLILDNSNPDFIWIGEHQLCYTLGRGSNYDNLLFSLNDDNYDVFKIDRGGEVTCHMPGQLVTYLVLDLKNFNKDLNWYLRKIEEIIIKILGTFNIDCHSRDGFTGVWIGNKKIASIGIGCKRWITINGFSINIDCELENFNKIVPCGIENCLMANMIDYNKNLNIQEVKRIVKKIIQEEFNFDFVSK.

The BPL/LPL catalytic domain maps to 35–213 (NSNPDFIWIG…IIQEEFNFDF (179 aa)). Residues 77–84 (RGGEVTCH), 144–146 (SIG), and 157–159 (GFS) contribute to the substrate site. Cys-175 acts as the Acyl-thioester intermediate in catalysis.

Belongs to the LipB family.

It is found in the cytoplasm. The catalysed reaction is octanoyl-[ACP] + L-lysyl-[protein] = N(6)-octanoyl-L-lysyl-[protein] + holo-[ACP] + H(+). It functions in the pathway protein modification; protein lipoylation via endogenous pathway; protein N(6)-(lipoyl)lysine from octanoyl-[acyl-carrier-protein]: step 1/2. Its function is as follows. Catalyzes the transfer of endogenously produced octanoic acid from octanoyl-acyl-carrier-protein onto the lipoyl domains of lipoate-dependent enzymes. Lipoyl-ACP can also act as a substrate although octanoyl-ACP is likely to be the physiological substrate. The protein is Octanoyltransferase of Prochlorococcus marinus (strain MIT 9215).